A 232-amino-acid chain; its full sequence is uncharacterized protein (232 aa).

5 helical membrane passes run L4–E24, V42–L62, L100–M120, L145–L165, and G171–F191.

It localises to the cell membrane. This is an uncharacterized protein from Aquifex aeolicus (strain VF5).